The sequence spans 85 residues: Progonadoliberin-2 (85 aa).

The signal sequence occupies residues 1–23 (MCASRLVLLLGLLLCVGAHLSSG). Gln-24 carries the pyrrolidone carboxylic acid modification. Gly-33 is subject to Glycine amide.

The protein belongs to the GnRH family. As to expression, midbrain tegmentum.

It is found in the secreted. Its function is as follows. Stimulates the secretion of gonadotropins. The polypeptide is Progonadoliberin-2 (gnrh2) (Verasper moseri (Barfin flounder)).